Here is a 199-residue protein sequence, read N- to C-terminus: ATP-dependent Clp protease proteolytic subunit (199 aa).

Residue Ser-97 is the Nucleophile of the active site. Residue His-122 is part of the active site.

This sequence belongs to the peptidase S14 family. As to quaternary structure, fourteen ClpP subunits assemble into 2 heptameric rings which stack back to back to give a disk-like structure with a central cavity, resembling the structure of eukaryotic proteasomes.

It is found in the cytoplasm. It carries out the reaction Hydrolysis of proteins to small peptides in the presence of ATP and magnesium. alpha-casein is the usual test substrate. In the absence of ATP, only oligopeptides shorter than five residues are hydrolyzed (such as succinyl-Leu-Tyr-|-NHMec, and Leu-Tyr-Leu-|-Tyr-Trp, in which cleavage of the -Tyr-|-Leu- and -Tyr-|-Trp bonds also occurs).. Cleaves peptides in various proteins in a process that requires ATP hydrolysis. Has a chymotrypsin-like activity. Plays a major role in the degradation of misfolded proteins. This chain is ATP-dependent Clp protease proteolytic subunit, found in Geotalea uraniireducens (strain Rf4) (Geobacter uraniireducens).